The sequence spans 333 residues: Homoserine O-succinyltransferase (333 aa).

The active-site Acyl-thioester intermediate is the C147. Substrate contacts are provided by K168 and S196. H239 serves as the catalytic Proton acceptor. Residue E241 is part of the active site. R253 contacts substrate.

The protein belongs to the MetA family.

It is found in the cytoplasm. The catalysed reaction is L-homoserine + succinyl-CoA = O-succinyl-L-homoserine + CoA. It participates in amino-acid biosynthesis; L-methionine biosynthesis via de novo pathway; O-succinyl-L-homoserine from L-homoserine: step 1/1. Functionally, transfers a succinyl group from succinyl-CoA to L-homoserine, forming succinyl-L-homoserine. The polypeptide is Homoserine O-succinyltransferase (Rhodopseudomonas palustris).